The sequence spans 428 residues: Glutamate-1-semialdehyde 2,1-aminomutase (428 aa).

The residue at position 267 (K267) is an N6-(pyridoxal phosphate)lysine.

This sequence belongs to the class-III pyridoxal-phosphate-dependent aminotransferase family. HemL subfamily. Homodimer. Pyridoxal 5'-phosphate is required as a cofactor.

The protein localises to the cytoplasm. The enzyme catalyses (S)-4-amino-5-oxopentanoate = 5-aminolevulinate. It functions in the pathway porphyrin-containing compound metabolism; protoporphyrin-IX biosynthesis; 5-aminolevulinate from L-glutamyl-tRNA(Glu): step 2/2. The polypeptide is Glutamate-1-semialdehyde 2,1-aminomutase (Sulfurihydrogenibium sp. (strain YO3AOP1)).